The following is a 139-amino-acid chain: Small ribosomal subunit protein bS6 (139 aa).

The segment covering alanine 95–aspartate 121 has biased composition (basic and acidic residues). The tract at residues alanine 95 to glutamate 139 is disordered. Over residues glutamate 124–glutamate 139 the composition is skewed to acidic residues.

Belongs to the bacterial ribosomal protein bS6 family.

Its function is as follows. Binds together with bS18 to 16S ribosomal RNA. This chain is Small ribosomal subunit protein bS6, found in Pseudomonas aeruginosa (strain LESB58).